A 461-amino-acid chain; its full sequence is tRNA (guanine(10)-N(2))-methyltransferase TRMT11 (461 aa).

It belongs to the class I-like SAM-binding methyltransferase superfamily. TRM11 methyltransferase family. As to quaternary structure, part of the heterodimeric TRMT11-TRM112 methyltransferase complex; this complex forms an active tRNA methyltransferase, where TRMT112 acts as an activator of the catalytic subunit TRMT11.

The protein localises to the cytoplasm. The enzyme catalyses guanosine(10) in tRNA + S-adenosyl-L-methionine = N(2)-methylguanosine(10) in tRNA + S-adenosyl-L-homocysteine + H(+). Catalytic subunit of the TRMT11-TRM112 methyltransferase complex, that specifically mediates the S-adenosyl-L-methionine-dependent N(2)-methylation of guanosine nucleotide at position 10 (m2G10) in tRNAs. This is one of the major tRNA (guanine-N(2))-methyltransferases. This is tRNA (guanine(10)-N(2))-methyltransferase TRMT11 from Gallus gallus (Chicken).